A 1712-amino-acid polypeptide reads, in one-letter code: U3 small nucleolar RNA-associated protein 10 (1712 aa).

HEAT repeat units lie at residues 164–202 (EELVLRILPVLNSCMQAKYGAETVAACYSIVTVLAGRGE), 490–528 (TCDFQNLIPYLLHALADPSAPVRRAAAACTVALSEASGS), 564–605 (TLLS…PKHG), 987–1025 (TQTISRVVPQLAASLRAKHKNFLTGVSDLLLSFTAAFEH), 1236–1275 (VISLISFLPSVEKVLQQSQHTDAKIISVGCIDRIVERFGK), 1605–1646 (EEVT…DSAA), and 1667–1705 (LGLLPEMLPFISELREDDDEMVERETQRWISQVEGVLGE).

Belongs to the HEATR1/UTP10 family. Component of the ribosomal small subunit (SSU) processome.

The protein resides in the nucleus. Its subcellular location is the nucleolus. Involved in nucleolar processing of pre-18S ribosomal RNA. Involved in ribosome biosynthesis. The polypeptide is U3 small nucleolar RNA-associated protein 10 (Phaeosphaeria nodorum (strain SN15 / ATCC MYA-4574 / FGSC 10173) (Glume blotch fungus)).